The following is a 180-amino-acid chain: ATP synthase subunit delta (180 aa).

It belongs to the ATPase delta chain family. In terms of assembly, F-type ATPases have 2 components, F(1) - the catalytic core - and F(0) - the membrane proton channel. F(1) has five subunits: alpha(3), beta(3), gamma(1), delta(1), epsilon(1). CF(0) has four main subunits: a(1), b(1), b'(1) and c(10-14). The alpha and beta chains form an alternating ring which encloses part of the gamma chain. F(1) is attached to F(0) by a central stalk formed by the gamma and epsilon chains, while a peripheral stalk is formed by the delta, b and b' chains.

It localises to the cellular thylakoid membrane. Its function is as follows. F(1)F(0) ATP synthase produces ATP from ADP in the presence of a proton or sodium gradient. F-type ATPases consist of two structural domains, F(1) containing the extramembraneous catalytic core and F(0) containing the membrane proton channel, linked together by a central stalk and a peripheral stalk. During catalysis, ATP synthesis in the catalytic domain of F(1) is coupled via a rotary mechanism of the central stalk subunits to proton translocation. This protein is part of the stalk that links CF(0) to CF(1). It either transmits conformational changes from CF(0) to CF(1) or is implicated in proton conduction. The chain is ATP synthase subunit delta from Prochlorococcus marinus (strain MIT 9515).